Reading from the N-terminus, the 141-residue chain is Nucleoside triphosphatase NudI (141 aa).

The Nudix hydrolase domain occupies 1–141 (MRQRTIVCPL…RHTLALKGLL (141 aa)). Residues 38 to 59 (GGVEPGERIEEALRREIREELG) carry the Nudix box motif.

The protein belongs to the Nudix hydrolase family. NudI subfamily. In terms of assembly, monomer. Requires Mg(2+) as cofactor.

The catalysed reaction is a ribonucleoside 5'-triphosphate + H2O = a ribonucleoside 5'-phosphate + diphosphate + H(+). The enzyme catalyses a 2'-deoxyribonucleoside 5'-triphosphate + H2O = a 2'-deoxyribonucleoside 5'-phosphate + diphosphate + H(+). It catalyses the reaction dUTP + H2O = dUMP + diphosphate + H(+). It carries out the reaction dTTP + H2O = dTMP + diphosphate + H(+). The catalysed reaction is dCTP + H2O = dCMP + diphosphate + H(+). In terms of biological role, catalyzes the hydrolysis of nucleoside triphosphates, with a preference for pyrimidine deoxynucleoside triphosphates (dUTP, dTTP and dCTP). The chain is Nucleoside triphosphatase NudI from Salmonella heidelberg (strain SL476).